We begin with the raw amino-acid sequence, 485 residues long: Pyruvate kinase (485 aa).

Position 33 (Arg33) interacts with substrate. Positions 35, 37, 67, and 68 each coordinate K(+). Residue 35 to 38 participates in ATP binding; it reads NFSH. ATP contacts are provided by Arg74 and Lys155. Residue Glu221 participates in Mg(2+) binding. Gly244, Asp245, and Thr277 together coordinate substrate. Residue Asp245 coordinates Mg(2+).

It belongs to the pyruvate kinase family. Homotetramer. The cofactor is Mg(2+). Requires K(+) as cofactor.

The enzyme catalyses pyruvate + ATP = phosphoenolpyruvate + ADP + H(+). It participates in carbohydrate degradation; glycolysis; pyruvate from D-glyceraldehyde 3-phosphate: step 5/5. The chain is Pyruvate kinase (pyk) from Chlamydia trachomatis serovar D (strain ATCC VR-885 / DSM 19411 / UW-3/Cx).